The primary structure comprises 312 residues: uncharacterized protein (312 aa).

Transmembrane regions (helical) follow at residues 13 to 33 (AAGT…SIWI), 45 to 65 (AVLL…FLIY), 81 to 101 (ACGA…IGLN), 105 to 125 (AMVE…FTAC), 133 to 153 (IQDL…LGGW), 162 to 182 (MIGA…LVLS), 198 to 218 (GMTA…AAGM), 229 to 249 (MYGL…VLML), 260 to 280 (AAAI…LFLG), and 283 to 303 (LGLI…GMEY). The EamA domain occupies 173–303 (AVYAGYLVLS…VFFVITGMEY (131 aa)).

It belongs to the EamA transporter family.

It localises to the cell membrane. This is an uncharacterized protein from Bacillus subtilis (strain 168).